A 781-amino-acid chain; its full sequence is Mitogen-activated protein kinase 7 (781 aa).

The disordered stretch occupies residues 1 to 27 (MAEPLKEDDGEDGSGEPPGPVKAEPAG). At Ala2 the chain carries N-acetylalanine. The tract at residues 2–77 (AEPLKEDDGE…VVSSARRRLT (76 aa)) is required for cytoplasmic targeting. Residues 55-347 (YEIIETIGNG…AAAALRHPFL (293 aa)) enclose the Protein kinase domain. Residues 61 to 69 (IGNGAYGVV) and Lys84 contribute to the ATP site. The interval 78 to 139 (GQQVAIKKIP…FKSVYVVLDL (62 aa)) is required for binding to MAP2K5. A necessary for oligomerization region spans residues 140–406 (MESDLHQIIH…QQIRFQPSLQ (267 aa)). Asp182 acts as the Proton acceptor in catalysis. The TXY motif lies at 219–221 (TEY). A disordered region spans residues 402–708 (QPSLQPVASE…PKGSGAGYGV (307 aa)). Residues 407–781 (PVASEPGCPD…LADLPDLQEP (375 aa)) are may not be required for kinase activity; required to stimulate MEF2C activity. Composition is skewed to pro residues over residues 433 to 445 (SPPP…PGPA) and 454 to 463 (QPPPPASEPA). Residues 476–486 (KAALKAALLKS) show a composition bias toward low complexity. 3 stretches are compositionally biased toward basic and acidic residues: residues 502-519 (PEPR…EREE), 527-544 (RAKE…KERG), and 563-573 (DNDRSLLERWT). A Nuclear localization signal motif is present at residues 505–539 (RKPVTAQERQREREEKRRRRQERAKEREKRRQERE). Composition is skewed to pro residues over residues 578-594 (PPAP…PPAG) and 601-614 (GPLP…PAPA). Low complexity-rich tracts occupy residues 615–632 (AGPA…LAPQ) and 642–652 (GPSALSVLPYF). Residues 653 to 664 (PSGPPPPDPGGA) are compositionally biased toward pro residues. The segment covering 668–685 (STSESPDVTLVTQQLSKS) has biased composition (polar residues). Residue Ser685 is modified to Phosphoserine. Thr698 is subject to Phosphothreonine.

It belongs to the protein kinase superfamily. CMGC Ser/Thr protein kinase family. MAP kinase subfamily. Interacts with MAP2K5. Forms oligomers. Interacts with MEF2A, MEF2C and MEF2D; the interaction phosphorylates the MEF2s and enhances transcriptional activity of MEF2A, MEF2C but not MEF2D. Interacts with SGK1. Interacts with PML. Interacts (via N-terminal half) with HSP90AB1-CDC37 chaperone complex in resting cells; the interaction is MAP2K5-independent and prevents MAPK7 from ubiquitination and proteasomal degradation. Interacts with STUB1/CHIP; the interaction is enhanced in the presence of IGF1 or MAP2K5 and promotes STUB1/CHIP E3 ligase activity. It depends on Mg(2+) as a cofactor. Dually phosphorylated on Thr-219 and Tyr-221, which activates the enzyme.

It localises to the cytoplasm. It is found in the nucleus. The protein resides in the PML body. It carries out the reaction L-seryl-[protein] + ATP = O-phospho-L-seryl-[protein] + ADP + H(+). The enzyme catalyses L-threonyl-[protein] + ATP = O-phospho-L-threonyl-[protein] + ADP + H(+). Its activity is regulated as follows. Activated by tyrosine and threonine phosphorylation. Activated in response to hyperosmolarity, hydrogen peroxide, and epidermal growth factor (EGF). Plays a role in various cellular processes such as proliferation, differentiation and cell survival. The upstream activator of MAPK7 is the MAPK kinase MAP2K5. Upon activation, it translocates to the nucleus and phosphorylates various downstream targets including MEF2C. EGF activates MAPK7 through a Ras-independent and MAP2K5-dependent pathway. As part of the MAPK/ERK signaling pathway, acts as a negative regulator of apoptosis in cardiomyocytes via interaction with STUB1/CHIP and promotion of STUB1-mediated ubiquitination and degradation of ICER-type isoforms of CREM. May have a role in muscle cell differentiation. May be important for endothelial function and maintenance of blood vessel integrity. MAP2K5 and MAPK7 interact specifically with one another and not with MEK1/ERK1 or MEK2/ERK2 pathways. Phosphorylates SGK1 at Ser-78 and this is required for growth factor-induced cell cycle progression. Involved in the regulation of p53/TP53 by disrupting the PML-MDM2 interaction. This Bos taurus (Bovine) protein is Mitogen-activated protein kinase 7 (MAPK7).